Reading from the N-terminus, the 145-residue chain is MQYLHCCLQIAPNQEGMVQAGGQGHGLARVVLRAVLSPPCWAPHSPCGSPAATEAGRLMRRLPSVGGRMTAPKTPRFLTRRPPASSPEDPPLPHPKTPRFLTQRPPASLPRRPRFLTLGPVSSHSSGDLRLWTAHQLPQQGGCPG.

A disordered region spans residues 62-145; sequence LPSVGGRMTA…QLPQQGGCPG (84 aa). Residues 84 to 95 are compositionally biased toward pro residues; that stretch reads ASSPEDPPLPHP.

This is an uncharacterized protein from Homo sapiens (Human).